The following is a 107-amino-acid chain: Large ribosomal subunit protein P1 (107 aa).

A compositionally biased stretch (low complexity) spans 67 to 82 (GPASAAPAGAAGAAAP). Positions 67 to 107 (GPASAAPAGAAGAAAPAEEKAEEKEEEKEESDEDMGFGLFD) are disordered. Over residues 90–101 (KEEEKEESDEDM) the composition is skewed to acidic residues.

The protein belongs to the eukaryotic ribosomal protein P1/P2 family. As to quaternary structure, P1 and P2 exist as dimers at the large ribosomal subunit.

It localises to the cytoplasm. Functionally, plays an important role in the elongation step of protein synthesis. The protein is Large ribosomal subunit protein P1 of Penicillium crustosum (Blue mold fungus).